A 285-amino-acid polypeptide reads, in one-letter code: Urease accessory protein UreD 1 (285 aa).

The protein belongs to the UreD family. UreD, UreF and UreG form a complex that acts as a GTP-hydrolysis-dependent molecular chaperone, activating the urease apoprotein by helping to assemble the nickel containing metallocenter of UreC. The UreE protein probably delivers the nickel.

The protein localises to the cytoplasm. Required for maturation of urease via the functional incorporation of the urease nickel metallocenter. In Pseudomonas syringae pv. syringae (strain B728a), this protein is Urease accessory protein UreD 1.